Consider the following 114-residue polypeptide: MGKLTLLLVVLLGWLQYSLWVGKNGVHDYMRVKQDVATQQANNAKLKSRNDQLFAEIDDLNGGQEAIEERARNELGMIKPGETFYRLVPDQNKRRTVGTASQSVASYPSVTASH.

The Cytoplasmic portion of the chain corresponds to methionine 1–lysine 3. Residues leucine 4–valine 21 form a helical membrane-spanning segment. The Periplasmic portion of the chain corresponds to glycine 22–histidine 114. Residues arginine 31–glycine 62 are a coiled coil.

It belongs to the FtsB family. As to quaternary structure, part of a complex composed of FtsB, FtsL and FtsQ.

The protein localises to the cell inner membrane. Essential cell division protein. May link together the upstream cell division proteins, which are predominantly cytoplasmic, with the downstream cell division proteins, which are predominantly periplasmic. The polypeptide is Cell division protein FtsB (Edwardsiella ictaluri (strain 93-146)).